Consider the following 500-residue polypeptide: Aspartyl/glutamyl-tRNA(Asn/Gln) amidotransferase subunit B (500 aa).

This sequence belongs to the GatB/GatE family. GatB subfamily. As to quaternary structure, heterotrimer of A, B and C subunits.

The catalysed reaction is L-glutamyl-tRNA(Gln) + L-glutamine + ATP + H2O = L-glutaminyl-tRNA(Gln) + L-glutamate + ADP + phosphate + H(+). It carries out the reaction L-aspartyl-tRNA(Asn) + L-glutamine + ATP + H2O = L-asparaginyl-tRNA(Asn) + L-glutamate + ADP + phosphate + 2 H(+). Functionally, allows the formation of correctly charged Asn-tRNA(Asn) or Gln-tRNA(Gln) through the transamidation of misacylated Asp-tRNA(Asn) or Glu-tRNA(Gln) in organisms which lack either or both of asparaginyl-tRNA or glutaminyl-tRNA synthetases. The reaction takes place in the presence of glutamine and ATP through an activated phospho-Asp-tRNA(Asn) or phospho-Glu-tRNA(Gln). The polypeptide is Aspartyl/glutamyl-tRNA(Asn/Gln) amidotransferase subunit B (Rhizobium meliloti (strain 1021) (Ensifer meliloti)).